Here is a 1074-residue protein sequence, read N- to C-terminus: Chitin synthase 2 (1074 aa).

Disordered stretches follow at residues 1–32 (MSHYHRQGGPGQPHDSYEDQQQPYYTDQAHSG), 56–179 (QAAP…PSQH), and 209–255 (RSDS…PYNN). Positions 19–29 (DQQQPYYTDQA) are enriched in polar residues. Residues 68–80 (RIRSNSSGSRSVS) are compositionally biased toward low complexity. 2 N-linked (GlcNAc...) asparagine glycosylation sites follow: Asn72 and Asn97. Residues 85 to 119 (AYTNQGIPPVPSNLSAARQRSDPSQALPPSSSSYA) show a composition bias toward polar residues. Over residues 129–143 (SSHRNAPNAPNSNHP) the composition is skewed to low complexity. N-linked (GlcNAc...) asparagine glycosylation occurs at Asn149. Asn289 carries N-linked (GlcNAc...) asparagine glycosylation. 8 consecutive transmembrane segments (helical) span residues 608–628 (VFGFISVLPGAFSAYRYKALL), 742–762 (LVLLVFSWFGIANFFLAFYFL), 779–799 (GAAIVEIFQNIFIAMVIVVLV), 817–837 (IIIFALIMGLALYAAGYTIYL), 867–887 (IVISLAATYVMWLLCSLLHLE), 891–911 (MLTSFVQYLFLTPTYVIILSM), 1001–1021 (LVLIWMCTNALVVIIFTSTWW), and 1048–1068 (IFWSTAGLSAVRFVGSITFLL).

The protein belongs to the chitin synthase family. Class II subfamily.

It is found in the cell membrane. It localises to the cytoplasmic vesicle membrane. The enzyme catalyses [(1-&gt;4)-N-acetyl-beta-D-glucosaminyl](n) + UDP-N-acetyl-alpha-D-glucosamine = [(1-&gt;4)-N-acetyl-beta-D-glucosaminyl](n+1) + UDP + H(+). Its function is as follows. Polymerizes chitin, a structural polymer of the cell wall and septum, by transferring the sugar moiety of UDP-GlcNAc to the non-reducing end of the growing chitin polymer. The protein is Chitin synthase 2 (CHS2) of Mycosarcoma maydis (Corn smut fungus).